The following is a 551-amino-acid chain: ATP synthase subunit alpha (551 aa).

Position 174–181 (Gly174–Thr181) interacts with ATP.

The protein belongs to the ATPase alpha/beta chains family. F-type ATPases have 2 components, CF(1) - the catalytic core - and CF(0) - the membrane proton channel. CF(1) has five subunits: alpha(3), beta(3), gamma(1), delta(1), epsilon(1). CF(0) has three main subunits: a(1), b(2) and c(9-12). The alpha and beta chains form an alternating ring which encloses part of the gamma chain. CF(1) is attached to CF(0) by a central stalk formed by the gamma and epsilon chains, while a peripheral stalk is formed by the delta and b chains.

The protein resides in the cell inner membrane. The catalysed reaction is ATP + H2O + 4 H(+)(in) = ADP + phosphate + 5 H(+)(out). In terms of biological role, produces ATP from ADP in the presence of a proton gradient across the membrane. The alpha chain is a regulatory subunit. This Salinibacter ruber (strain DSM 13855 / M31) protein is ATP synthase subunit alpha.